The sequence spans 249 residues: Aquaporin TIP2-1 (249 aa).

Transmembrane regions (helical) follow at residues 20-40 (AYVA…GSAI) and 54-74 (AGLV…VSVA). The short motif at 83-85 (NPA) is the NPA 1 element. 3 helical membrane-spanning segments follow: residues 102–122 (VFYW…LGFV), 141–161 (GVVF…ATAA), and 168–188 (LGTI…LAAG). The NPA 2 signature appears at 196-198 (NPA). The chain crosses the membrane as a helical span at residues 217-237 (WVGPLVGGGLAGLVYGDVFIG).

Belongs to the MIP/aquaporin (TC 1.A.8) family. TIP (TC 1.A.8.10) subfamily.

The protein resides in the vacuole membrane. In terms of biological role, aquaporins facilitate the transport of water and small neutral solutes across cell membranes. The chain is Aquaporin TIP2-1 (TIP2-1) from Zea mays (Maize).